Here is a 418-residue protein sequence, read N- to C-terminus: D-amino acid dehydrogenase (418 aa).

Valine 3–tryptophan 17 lines the FAD pocket.

It belongs to the DadA oxidoreductase family. The cofactor is FAD.

It catalyses the reaction a D-alpha-amino acid + A + H2O = a 2-oxocarboxylate + AH2 + NH4(+). It functions in the pathway amino-acid degradation; D-alanine degradation; NH(3) and pyruvate from D-alanine: step 1/1. Functionally, oxidative deamination of D-amino acids. This Neisseria meningitidis serogroup C (strain 053442) protein is D-amino acid dehydrogenase.